The sequence spans 1578 residues: FH1/FH2 domain-containing protein 3 (1578 aa).

The region spanning N18–E405 is the GBD/FH3 domain. 7 disordered regions span residues H324–P518, S535–G824, V915–S942, L979–P1013, Q1418–D1462, R1490–T1514, and S1528–A1565. 2 positions are modified to phosphoserine: S345 and S376. A compositionally biased stretch (polar residues) spans I368–S383. Residues E399 to A425 show a composition bias toward acidic residues. T413 bears the Phosphothreonine mark. Low complexity predominate over residues A434–D446. The span at A453–A473 shows a compositional bias: polar residues. The segment covering S553–Q583 has biased composition (low complexity). A compositionally biased stretch (polar residues) spans D584–R598. Positions F597–R645 form a coiled coil. Residues Q599–Y651 are compositionally biased toward basic and acidic residues. Low complexity-rich tracts occupy residues D675–A684 and S692–Q701. Over residues S751–P761 the composition is skewed to acidic residues. Basic and acidic residues predominate over residues E762–N782. Positions S784–S793 are enriched in low complexity. A compositionally biased stretch (basic and acidic residues) spans L795–A809. S921 carries the post-translational modification Phosphoserine. Position 933 is a phosphothreonine (T933). Residues P985–P1013 show a composition bias toward pro residues. One can recognise an FH1 domain in the interval P985–P1016. The FH2 domain occupies G1039 to K1435. Basic residues predominate over residues K1420 to G1434. The segment covering S1444–G1456 has biased composition (low complexity). Positions D1515–A1547 constitute a DAD domain. Positions E1541–L1556 are enriched in basic residues.

This sequence belongs to the formin homology family. In terms of assembly, interacts with nestin/NES-based interfilament (IF). Interacts with SQSTM1. Expressed in the heart, including left ventricle, kidney, brain and skeletal muscle, including soleus and tibialis anterior (at protein level).

It localises to the cytoplasm. Its subcellular location is the cytoskeleton. The protein resides in the myofibril. The protein localises to the sarcomere. It is found in the z line. Its function is as follows. May play a role in actin filament polymerization in cardiomyocytes. Actin-organizing protein that may cause stress fiber formation together with cell elongation. This Mus musculus (Mouse) protein is FH1/FH2 domain-containing protein 3 (Fhod3).